The primary structure comprises 467 residues: Polygalacturonase (467 aa).

A signal peptide spans 1 to 27 (MALQRRFFQFVIITLLIPSFILGYTSA). D283 acts as the Proton donor in catalysis. N-linked (GlcNAc...) asparagine glycosylation is present at N290. H306 is a catalytic residue.

The protein belongs to the glycosyl hydrolase 28 family.

The protein resides in the secreted. It is found in the cell wall. The enzyme catalyses (1,4-alpha-D-galacturonosyl)n+m + H2O = (1,4-alpha-D-galacturonosyl)n + (1,4-alpha-D-galacturonosyl)m.. Acts in concert with the pectinesterase, in the ripening process. Is involved in cell wall metabolism, specifically in polyuronide degradation. The sequence is that of Polygalacturonase from Actinidia deliciosa (Kiwi).